An 848-amino-acid polypeptide reads, in one-letter code: Aryl hydrocarbon receptor (848 aa).

Positions 1–9 are excised as a propeptide; that stretch reads MSSGANITY. The tract at residues 1–38 is disordered; it reads MSSGANITYASRKRRKPVQKTVKPIPAEGIKSNPSKRH. Short sequence motifs (nuclear localization signal) lie at residues 12-15 and 36-41; these read RKRR and KRHRDR. Residues 26–79 enclose the bHLH domain; the sequence is PAEGIKSNPSKRHRDRLNTELDRLASLLPFPQDVINKLDKLSVLRLSVSYLRAK. The interval 37–65 is DNA-binding; sequence RHRDRLNTELDRLASLLPFPQDVINKLDK. Required for maintaining the overall integrity of the AHR:ARNT heterodimer and its transcriptional activity stretches follow at residues 49-81, 116-124, and 260-262; these read LASL…AKSF, LLQALNGFV, and FAI. The Nuclear export signal motif lies at 63–71; it reads LDKLSVLRL. The PAS 1 domain maps to 116–179; sequence LLQALNGFVL…RQLHWALNPD (64 aa). One can recognise a PAS 2 domain in the interval 269-336; it reads PSILEIRTKN…CAESHIRMIK (68 aa). The 39-residue stretch at 342–380 folds into the PAC domain; the sequence is MTVFRLFAKHSRWRWVQSNARLIYRNGRPDYIIATQRPL. Residues 421 to 449 are disordered; sequence LPIRTKSNTSRKDWAPQSTPSKDSFHPSS. A compositionally biased stretch (polar residues) spans 436-449; the sequence is PQSTPSKDSFHPSS.

As to quaternary structure, homodimer. Heterodimer; efficient DNA binding requires dimerization with another bHLH protein. Interacts with ARNT; the heterodimer ARNT:AHR binds to core DNA sequence 5'-TGCGTG-3' within the dioxin response element (DRE) of target gene promoters and activates their transcription. Binds MYBBP1A. Interacts with coactivators including SRC-1, RIP140 and NOCA7, and with the corepressor SMRT. Interacts with NEDD8 and IVNS1ABP. Interacts with BMAL1. Interacts with HSP90AB1. Interacts with TIPARP; leading to mono-ADP-ribosylation of AHR and subsequent inhibition of AHR. In terms of processing, mono-ADP-ribosylated, leading to inhibit transcription activator activity of AHR. As to expression, expressed in all tissues tested including brain, heart, kidney, liver, lung, muscle, ovary, skin, spleen and thymus.

The protein localises to the cytoplasm. The protein resides in the nucleus. In terms of biological role, ligand-activated transcription factor that enables cells to adapt to changing conditions by sensing compounds from the environment, diet, microbiome and cellular metabolism, and which plays important roles in development, immunity and cancer. Upon ligand binding, translocates into the nucleus, where it heterodimerizes with ARNT and induces transcription by binding to xenobiotic response elements (XRE). Regulates a variety of biological processes, including angiogenesis, hematopoiesis, drug and lipid metabolism, cell motility and immune modulation. Xenobiotics can act as ligands: upon xenobiotic-binding, activates the expression of multiple phase I and II xenobiotic chemical metabolizing enzyme genes (such as the CYP1A1 gene). Mediates biochemical and toxic effects of halogenated aromatic hydrocarbons. Next to xenobiotics, natural ligands derived from plants, microbiota, and endogenous metabolism are potent AHR agonists. Tryptophan (Trp) derivatives constitute an important class of endogenous AHR ligands. Acts as a negative regulator of anti-tumor immunity: indoles and kynurenic acid generated by Trp catabolism act as ligand and activate AHR, thereby promoting AHR-driven cancer cell motility and suppressing adaptive immunity. Regulates the circadian clock by inhibiting the basal and circadian expression of the core circadian component PER1. Inhibits PER1 by repressing the CLOCK-BMAL1 heterodimer mediated transcriptional activation of PER1. The heterodimer ARNT:AHR binds to core DNA sequence 5'-TGCGTG-3' within the dioxin response element (DRE) of target gene promoters and activates their transcription. In Mus musculus (Mouse), this protein is Aryl hydrocarbon receptor (Ahr).